Here is a 303-residue protein sequence, read N- to C-terminus: Sulfotransferase 6B1 (303 aa).

65–70 (KCGSNW) is a binding site for 3'-phosphoadenylyl sulfate. His-118 (proton acceptor) is an active-site residue. 3'-phosphoadenylyl sulfate-binding positions include Arg-140, Ser-148, Tyr-203, 237–242 (STFQAM), and 259–261 (RKG).

This sequence belongs to the sulfotransferase 1 family.

It is found in the cytoplasm. Its subcellular location is the cytosol. The catalysed reaction is thyroxine + 3'-phosphoadenylyl sulfate = thyroxine sulfate + adenosine 3',5'-bisphosphate + H(+). Its function is as follows. Sulfotransferase that utilizes 3'-phospho-5'-adenylyl sulfate (PAPS) as sulfonate donor to catalyze the sulfate conjugation of thyroxine. Involved in the metabolism of thyroxine. This is Sulfotransferase 6B1 (SULT6B1) from Pan troglodytes (Chimpanzee).